The following is a 324-amino-acid chain: UDP-N-acetylenolpyruvoylglucosamine reductase (324 aa).

Residues Phe-36–Glu-203 enclose the FAD-binding PCMH-type domain. Residue Arg-183 is part of the active site. Residue Ser-232 is the Proton donor of the active site. Residue Glu-302 is part of the active site.

Belongs to the MurB family. FAD is required as a cofactor.

It localises to the cytoplasm. It catalyses the reaction UDP-N-acetyl-alpha-D-muramate + NADP(+) = UDP-N-acetyl-3-O-(1-carboxyvinyl)-alpha-D-glucosamine + NADPH + H(+). It participates in cell wall biogenesis; peptidoglycan biosynthesis. Cell wall formation. The sequence is that of UDP-N-acetylenolpyruvoylglucosamine reductase from Rhizobium meliloti (strain 1021) (Ensifer meliloti).